Reading from the N-terminus, the 165-residue chain is Large ribosomal subunit protein uL10 (165 aa).

This sequence belongs to the universal ribosomal protein uL10 family. As to quaternary structure, part of the ribosomal stalk of the 50S ribosomal subunit. The N-terminus interacts with L11 and the large rRNA to form the base of the stalk. The C-terminus forms an elongated spine to which L12 dimers bind in a sequential fashion forming a multimeric L10(L12)X complex.

In terms of biological role, forms part of the ribosomal stalk, playing a central role in the interaction of the ribosome with GTP-bound translation factors. This chain is Large ribosomal subunit protein uL10, found in Citrobacter koseri (strain ATCC BAA-895 / CDC 4225-83 / SGSC4696).